A 387-amino-acid polypeptide reads, in one-letter code: Involucrin (387 aa).

2 disordered regions span residues 1–319 (MSQQ…VHLG) and 347–387 (VCIP…LKQE). The span at 28 to 37 (NTQQDQMKQP) shows a compositional bias: polar residues. The segment covering 62–71 (QVPEQECEPQ) has biased composition (low complexity). Composition is skewed to basic and acidic residues over residues 85-96 (KQQEPQEQEVHP), 104-115 (QEQEAHLGKKQE), 147-179 (QEVHLEKQLQEPQEVHLEKQLQEQEVHLEKQLQ), and 231-245 (QLEKQQEAQEQELHL).

Belongs to the involucrin family. As to quaternary structure, directly or indirectly cross-linked to cornifelin (CNFN). Substrate of transglutaminase. Specific glutamines or lysines are cross-linked to keratins, desmoplakin and to inter involucrin molecules. In terms of tissue distribution, keratinocytes of epidermis and other stratified squamous epithelia.

It localises to the cytoplasm. In terms of biological role, part of the insoluble cornified cell envelope (CE) of stratified squamous epithelia. This is Involucrin (IVL) from Cephalopachus bancanus (Western tarsier).